The chain runs to 412 residues: Na(+)-translocating NADH-quinone reductase subunit B (412 aa).

3 helical membrane passes run 57-77 (MILVWFAVFPAMFWGMYNVGL), 127-147 (VFFLPIYITVFIVGGFWEVLF), and 163-183 (SILFALIVPPTLPLWQAALGI). An FMN phosphoryl threonine modification is found at threonine 236. 5 helical membrane-spanning segments follow: residues 270-290 (GSIGEVSTLMILIGGAIILFG), 297-317 (IVAGVMIGMIATATLFNVIGS), 322-342 (MFSMPWYWHLVLGGFAFGMMF), 358-378 (WSYGVLIGVMCVLIRVVNPAY), and 381-401 (GMMLAILFANLFAPLFDYLVV).

The protein belongs to the NqrB/RnfD family. In terms of assembly, composed of six subunits; NqrA, NqrB, NqrC, NqrD, NqrE and NqrF. The cofactor is FMN.

Its subcellular location is the cell inner membrane. The catalysed reaction is a ubiquinone + n Na(+)(in) + NADH + H(+) = a ubiquinol + n Na(+)(out) + NAD(+). Its function is as follows. NQR complex catalyzes the reduction of ubiquinone-1 to ubiquinol by two successive reactions, coupled with the transport of Na(+) ions from the cytoplasm to the periplasm. NqrA to NqrE are probably involved in the second step, the conversion of ubisemiquinone to ubiquinol. The sequence is that of Na(+)-translocating NADH-quinone reductase subunit B from Klebsiella pneumoniae (strain 342).